The primary structure comprises 875 residues: Alanine--tRNA ligase (875 aa).

Zn(2+) contacts are provided by His-565, His-569, Cys-666, and His-670.

The protein belongs to the class-II aminoacyl-tRNA synthetase family. The cofactor is Zn(2+).

Its subcellular location is the cytoplasm. The enzyme catalyses tRNA(Ala) + L-alanine + ATP = L-alanyl-tRNA(Ala) + AMP + diphosphate. Its function is as follows. Catalyzes the attachment of alanine to tRNA(Ala) in a two-step reaction: alanine is first activated by ATP to form Ala-AMP and then transferred to the acceptor end of tRNA(Ala). Also edits incorrectly charged Ser-tRNA(Ala) and Gly-tRNA(Ala) via its editing domain. The sequence is that of Alanine--tRNA ligase from Methylibium petroleiphilum (strain ATCC BAA-1232 / LMG 22953 / PM1).